Reading from the N-terminus, the 590-residue chain is Aspartate--tRNA(Asp/Asn) ligase (590 aa).

Glutamate 175 is a binding site for L-aspartate. The segment at 199–202 is aspartate; it reads QQYK. L-aspartate-binding residues include arginine 221 and histidine 450. 221–223 is an ATP binding site; the sequence is RDE. Glutamate 484 contributes to the ATP binding site. L-aspartate is bound at residue arginine 491. ATP is bound at residue 536-539; it reads GIDR.

The protein belongs to the class-II aminoacyl-tRNA synthetase family. Type 1 subfamily. In terms of assembly, homodimer.

It localises to the cytoplasm. The enzyme catalyses tRNA(Asx) + L-aspartate + ATP = L-aspartyl-tRNA(Asx) + AMP + diphosphate. Its function is as follows. Aspartyl-tRNA synthetase with relaxed tRNA specificity since it is able to aspartylate not only its cognate tRNA(Asp) but also tRNA(Asn). Reaction proceeds in two steps: L-aspartate is first activated by ATP to form Asp-AMP and then transferred to the acceptor end of tRNA(Asp/Asn). The chain is Aspartate--tRNA(Asp/Asn) ligase from Azorhizobium caulinodans (strain ATCC 43989 / DSM 5975 / JCM 20966 / LMG 6465 / NBRC 14845 / NCIMB 13405 / ORS 571).